The chain runs to 1059 residues: Disks large-associated protein 2 (1059 aa).

Disordered stretches follow at residues 31–54 (GEPE…PAEE) and 245–311 (KSHS…SDST). Polar residues predominate over residues 245–261 (KSHSLEGSSKSNINGTK). A compositionally biased stretch (basic and acidic residues) spans 262–271 (SDSRVDDHHQ). The span at 272–285 (SHLSKHSKRSKSKE) shows a compositional bias: basic residues. A phosphoserine mark is found at Ser-302, Ser-308, Ser-390, and Ser-456. The interval 613 to 669 (YKKTPPPVPPRTTSKPLISVTAQSSTESTQDAYQDSRAQRMSPWPQDSRGGLYNSMD) is disordered. Polar residues predominate over residues 632-645 (VTAQSSTESTQDAY). Phosphoserine is present on residues Ser-667, Ser-670, Ser-673, and Ser-720. A disordered region spans residues 723–756 (VQDSEFPDHQPYPRSDVETATDSDTESRGLREYH). Position 743 is a phosphothreonine (Thr-743). Ser-745 carries the post-translational modification Phosphoserine. Residues 747–756 (TESRGLREYH) show a composition bias toward basic and acidic residues. Ser-776, Ser-811, Ser-983, and Ser-1012 each carry phosphoserine. A disordered region spans residues 985–1025 (ERKEERKIPPPIPKKPPKGKFPITREKSLDLPDRQRQEARR). The segment covering 1007 to 1025 (ITREKSLDLPDRQRQEARR) has biased composition (basic and acidic residues).

The protein belongs to the SAPAP family. In terms of assembly, interacts with DLG4/PSD-95. Expressed in various brain areas.

The protein resides in the cell membrane. Its subcellular location is the postsynaptic density. It localises to the synapse. In terms of biological role, may play a role in the molecular organization of synapses and neuronal cell signaling. Could be an adapter protein linking ion channel to the subsynaptic cytoskeleton. May induce enrichment of PSD-95/SAP90 at the plasma membrane. This chain is Disks large-associated protein 2, found in Mus musculus (Mouse).